Here is a 105-residue protein sequence, read N- to C-terminus: Precursor of CEP15 (105 aa).

The first 29 residues, 1-29, serve as a signal peptide directing secretion; the sequence is MDATKIKFDVILLSFLLIISGIPSNLGLS. A propeptide spanning residues 30–90 is cleaved from the precursor; the sequence is TSVRGTTRSE…PSPPVPDYDD (61 aa). Over residues 68 to 80 the composition is skewed to low complexity; sequence DYYDGGSSSSTTS. Residues 68 to 105 are disordered; sequence DYYDGGSSSSTTSPSPPVPDYDDIYRRQGDVPSPGIGH. Proline 99 and proline 101 each carry hydroxyproline.

This sequence belongs to the C-terminally encoded plant signaling peptide (CEP) family. Interacts with CEP receptors (e.g. CEPR1 and CEPR2). Post-translationally, the mature small signaling peptide is generated by proteolytic processing of the longer precursor.

It localises to the secreted. It is found in the extracellular space. The protein resides in the apoplast. Extracellular signaling peptide that may regulate primary root growth rate and systemic nitrogen (N)-demand signaling. The polypeptide is Precursor of CEP15 (Arabidopsis thaliana (Mouse-ear cress)).